A 246-amino-acid chain; its full sequence is Outer membrane protein assembly factor BamD (246 aa).

Positions 1–22 (MKKKNSIIFVFMILFFNSTVQS) are cleaved as a signal peptide.

It belongs to the BamD family. Part of the Bam complex.

It is found in the cell outer membrane. Its function is as follows. Part of the outer membrane protein assembly complex, which is involved in assembly and insertion of beta-barrel proteins into the outer membrane. In Buchnera aphidicola subsp. Acyrthosiphon pisum (strain APS) (Acyrthosiphon pisum symbiotic bacterium), this protein is Outer membrane protein assembly factor BamD.